The following is a 676-amino-acid chain: Cysteine-rich receptor-like protein kinase 8 (676 aa).

An N-terminal signal peptide occupies residues 1-34; it reads MYIVSMFGLAGLEALICFIFLFLFSFLTSFKASA. Topologically, residues 35 to 291 are extracellular; it reads QNPFYLNHDC…IPGKSGNSTV (257 aa). 2 Gnk2-homologous domains span residues 38 to 142 and 151 to 255; these read FYLN…HKNF and ELIM…LYAF. 8 N-linked (GlcNAc...) asparagine glycosylation sites follow: N46, N53, N71, N114, N159, N187, N257, and N288. The helical transmembrane segment at 292-312 threads the bilayer; it reads LVVAIVVLAVLLFIALVGYCF. The Cytoplasmic segment spans residues 313 to 676; that stretch reads LAQRTKKTFD…DELITDLYPR (364 aa). One can recognise a Protein kinase domain in the interval 353–639; sequence FAESNKIGRG…TLPVPRQPGF (287 aa). ATP contacts are provided by residues 359–367 and K381; that span reads IGRGGFGEV. Residue Y426 is modified to Phosphotyrosine. The Proton acceptor role is filled by D478. S482 is subject to Phosphoserine. T518 carries the post-translational modification Phosphothreonine. Y526 is modified (phosphotyrosine). Positions 640 to 666 are disordered; that stretch reads FIQSSPVKDPTDSDQSTTTKSTPASID. Over residues 652-662 the composition is skewed to low complexity; sequence SDQSTTTKSTP.

It belongs to the protein kinase superfamily. Ser/Thr protein kinase family. CRK subfamily.

It is found in the membrane. The enzyme catalyses L-seryl-[protein] + ATP = O-phospho-L-seryl-[protein] + ADP + H(+). The catalysed reaction is L-threonyl-[protein] + ATP = O-phospho-L-threonyl-[protein] + ADP + H(+). The polypeptide is Cysteine-rich receptor-like protein kinase 8 (CRK8) (Arabidopsis thaliana (Mouse-ear cress)).